The following is a 1981-amino-acid chain: Nonribosomal peptide synthetase rstn8 (1981 aa).

Positions 251-638 (SYAALEQESA…ELGEIEYQAS (388 aa)) are adenylation. The 78-residue stretch at 763-840 (HHAGQKYDEM…ELFHRSQKTP (78 aa)) folds into the Carrier 1 domain. Serine 800 carries the O-(pantetheine 4'-phosphoryl)serine modification. Residues 883-1293 (EDIYPCSPLQ…DASMGTILSQ (411 aa)) form a condensation 1 region. Residues 1438–1514 (EPLLPLEATL…CLASTLNSRP (77 aa)) enclose the Carrier 2 domain. Residue serine 1475 is modified to O-(pantetheine 4'-phosphoryl)serine. Residues 1586-1978 (EEQIDLVSFA…TFAQSIERII (393 aa)) are condensation 1. Residues 1754 to 1774 (HHHHQHEGRQHHGASETNGNR) are disordered.

It belongs to the NRP synthetase family. Requires pantetheine 4'-phosphate as cofactor.

The catalysed reaction is 2 L-tryptophan = cyclo(L-Trp-L-Trp) + 2 H2O. It participates in alkaloid biosynthesis. Functionally, nonribosomal peptide synthetase; part of the gene cluster that mediates the biosynthesis of okaramine B, a prenylated indole alkaloid that possesses an unusual octacyclic ring system, including a four-membered azetidine ring and an eight-membered azocine ring, and that exhibits insecticidal activity against silkworm larvae. Within the pathway, okaA acts as a bimodular non-ribosomal peptide synthetase (NRPS) that condenses two tryptophan molecules into cyclo(L-Trp-L-Trp). Prenylation by the prenyltransferase okaC then leads to the formation of cyclo(N8-(alpha,alpha-dimethylallyl)-L-Trp-6a-(alpha,alpha-dime-thylallyl)-L-Trp). This is followed by indole 2,3-epoxidation by the FAD-dependent monooxygenase okaB to facilitate the formation of the hexahydropyrrolo[2,3-b]indole (HPI) moiety of okaramine C. The cytochrome P450 monooxygenase okaD then likely catalyzes formation of the eight-membered ring of okaramine A. The dioxygenase okaE further forms the unusual 2-dimethyl-3-methyl-azetidine ring to yield 12-deshydroxyl okaramine E, as well as the hydroxylation of 12-deshydroxyl okaramine E to produce okaramine E. The cytochrome P450 monoxygenase okaG converts 12-deshydroxyl okaramine E into 3-desmethyl okaramine B which is further methylated by the methyltransferase okaF into okaramine B. In a shunt pathway, okaG and okaF together are also able to convert okaramine E into okaramine D. Okaramine H is produced by nonenzymatic conversion from okaramine A. The sequence is that of Nonribosomal peptide synthetase rstn8 from Penicillium ochrochloron.